Reading from the N-terminus, the 262-residue chain is Indole-3-glycerol phosphate synthase (262 aa).

Belongs to the TrpC family.

It carries out the reaction 1-(2-carboxyphenylamino)-1-deoxy-D-ribulose 5-phosphate + H(+) = (1S,2R)-1-C-(indol-3-yl)glycerol 3-phosphate + CO2 + H2O. The protein operates within amino-acid biosynthesis; L-tryptophan biosynthesis; L-tryptophan from chorismate: step 4/5. The chain is Indole-3-glycerol phosphate synthase from Thiobacillus denitrificans (strain ATCC 25259 / T1).